A 358-amino-acid chain; its full sequence is DnaJ homolog subfamily B member 11 (358 aa).

The N-terminal stretch at 1–22 (MAPQNLGTFCLLLLYLIGTVIA) is a signal peptide. The region spanning 25–90 (DFYKILGVPR…EKRKQYDTYG (66 aa)) is the J domain. Phosphothreonine is present on Thr188. Asn261 carries N-linked (GlcNAc...) asparagine glycosylation.

In terms of assembly, part of a large chaperone multiprotein complex comprising DNAJB11, HSP90B1, HSPA5, HYOU, PDIA2, PDIA4, PDIA6, PPIB, SDF2L1, UGGT1 and very small amounts of ERP29, but not, or at very low levels, CALR nor CANX. Binds to denatured substrates in an ATP-independent manner. Interacts via the J domain with HSPA5 in an ATP-dependent manner. In terms of processing, contains high-mannose Endo H-sensitive carbohydrates. Cys-169, Cys-171, Cys-193 and Cys-196 form intramolecular disulfide bonds. The preferential partner for each Cys is not known.

The protein resides in the endoplasmic reticulum lumen. Its function is as follows. As a co-chaperone for HSPA5 it is required for proper folding, trafficking or degradation of proteins. Binds directly to both unfolded proteins that are substrates for ERAD and nascent unfolded peptide chains, but dissociates from the HSPA5-unfolded protein complex before folding is completed. May help recruiting HSPA5 and other chaperones to the substrate. Stimulates HSPA5 ATPase activity. It is necessary for maturation and correct trafficking of PKD1. The sequence is that of DnaJ homolog subfamily B member 11 (DNAJB11) from Bos taurus (Bovine).